Consider the following 105-residue polypeptide: Protein AlbB (105 aa).

In terms of biological role, involved in the biosynthesis of albonoursin (cyclo[(alpha,beta-dehydro-Phe)-(alpha,beta-dehydro-Leu)]), an antibacterial peptide. AlbB is essential for cyclic dipeptide oxidase AlbA (CDO) activity. In Streptomyces noursei (Streptomyces albulus), this protein is Protein AlbB (albB).